We begin with the raw amino-acid sequence, 1104 residues long: Extended synaptotagmin-1 (1104 aa).

M1 is subject to N-acetylmethionine. Residues 1-38 (MERSPGEGPSPSPTDQPSAPSDPTGQPPAAHAKPDPGS) lie on the Cytoplasmic side of the membrane. The disordered stretch occupies residues 1-47 (MERSPGEGPSPSPTDQPSAPSDPTGQPPAAHAKPDPGSGGQPAGPGA). The segment covering 15 to 24 (DQPSAPSDPT) has biased composition (polar residues). Gly residues predominate over residues 37-47 (GSGGQPAGPGA). The chain crosses the membrane as a helical span at residues 39–59 (GGQPAGPGAAGEALAVLTSFG). The Lumenal portion of the chain corresponds to 60 to 62 (KRL). The helical transmembrane segment at 63-83 (LVLIPVYLAGAVGLSVGFVLF) threads the bilayer. The Cytoplasmic segment spans residues 84 to 1104 (GLALYLGWRR…LMDDKDKGSS (1021 aa)). Positions 91 to 116 (WRRVRDEKERSLRAARQLLDDEEQLT) form a coiled coil. The region spanning 135-313 (DVEKAEWLNK…LPNRLLVPLV (179 aa)) is the SMP-LTD domain. C2 domains are found at residues 312 to 433 (LVPD…DDWF), 460 to 580 (QVLQ…QLSS), 627 to 751 (SVDA…DEWL), and 777 to 899 (LEEV…TLNS). S324 carries the phosphoserine; by CDK5 modification. Residues K344, D345, D357, D404, D406, D408, D410, and D411 each coordinate Ca(2+). Disordered stretches follow at residues 617–641 (VDSE…TPDS), 813–833 (RKGT…TSHK), and 924–950 (SHSY…VTSS). K817 bears the N6-acetyllysine mark. 2 positions are modified to phosphoserine: S820 and S941. Low complexity predominate over residues 925–946 (HSYSHSSSSLSEEPELSGGPPH). T948 carries the post-translational modification Phosphothreonine. A phosphoserine mark is found at S949 and S963. The region spanning 971 to 1093 (PLGQVKLTVW…DLSQGVARWY (123 aa)) is the C2 5 domain. A Phosphotyrosine modification is found at Y1009. The segment at 1018 to 1025 (KNRGTKRK) is required for phosphatidylinositol 4,5-bisphosphate-dependent location at the cell membrane. Position 1034 is a phosphoserine (S1034).

The protein belongs to the extended synaptotagmin family. Interacts with ESYT2 and ESYT3. Interacts with ADGRD1; inhibiting the G-protein-coupled receptor activity of ADGRD1. Interaction with ADGRD1 is abolished when cytosolic calcium increases, relieving ADGRD1 G-protein-coupled receptor activity. Interacts (phosphorylated form) with SLC2A4. In terms of processing, phosphorylated on Ser residues in insulin-treated adipocytes (in vitro); this promotes interaction with SLC2A4.

It localises to the endoplasmic reticulum membrane. It is found in the cell membrane. Its function is as follows. Binds calcium (via the C2 domains) and translocates to sites of contact between the endoplasmic reticulum and the cell membrane in response to increased cytosolic calcium levels. Helps tether the endoplasmic reticulum to the cell membrane and promotes the formation of appositions between the endoplasmic reticulum and the cell membrane. Acts as an inhibitor of ADGRD1 G-protein-coupled receptor activity in absence of cytosolic calcium. Binds glycerophospholipids in a barrel-like domain and may play a role in cellular lipid transport. This chain is Extended synaptotagmin-1 (ESYT1), found in Pongo abelii (Sumatran orangutan).